Reading from the N-terminus, the 196-residue chain is GTP cyclohydrolase 1 (196 aa).

Positions 86, 89, and 158 each coordinate Zn(2+).

It belongs to the GTP cyclohydrolase I family. Homomer.

The enzyme catalyses GTP + H2O = 7,8-dihydroneopterin 3'-triphosphate + formate + H(+). It participates in cofactor biosynthesis; 7,8-dihydroneopterin triphosphate biosynthesis; 7,8-dihydroneopterin triphosphate from GTP: step 1/1. This is GTP cyclohydrolase 1 from Clostridium botulinum (strain Kyoto / Type A2).